The sequence spans 156 residues: 6,7-dimethyl-8-ribityllumazine synthase (156 aa).

5-amino-6-(D-ribitylamino)uracil-binding positions include Phe-22, 56-58, and 80-82; these read AME and AVI. Residue 85–86 participates in (2S)-2-hydroxy-3-oxobutyl phosphate binding; sequence ET. The Proton donor role is filled by His-88. Residue Phe-113 participates in 5-amino-6-(D-ribitylamino)uracil binding. Arg-127 serves as a coordination point for (2S)-2-hydroxy-3-oxobutyl phosphate.

Belongs to the DMRL synthase family.

It catalyses the reaction (2S)-2-hydroxy-3-oxobutyl phosphate + 5-amino-6-(D-ribitylamino)uracil = 6,7-dimethyl-8-(1-D-ribityl)lumazine + phosphate + 2 H2O + H(+). Its pathway is cofactor biosynthesis; riboflavin biosynthesis; riboflavin from 2-hydroxy-3-oxobutyl phosphate and 5-amino-6-(D-ribitylamino)uracil: step 1/2. In terms of biological role, catalyzes the formation of 6,7-dimethyl-8-ribityllumazine by condensation of 5-amino-6-(D-ribitylamino)uracil with 3,4-dihydroxy-2-butanone 4-phosphate. This is the penultimate step in the biosynthesis of riboflavin. In Kosmotoga olearia (strain ATCC BAA-1733 / DSM 21960 / TBF 19.5.1), this protein is 6,7-dimethyl-8-ribityllumazine synthase.